The chain runs to 309 residues: Malate dehydrogenase (309 aa).

Residues 9–14 and aspartate 33 contribute to the NAD(+) site; that span reads GAGFVG. Residues arginine 82 and arginine 88 each contribute to the substrate site. Residues asparagine 95 and 118-120 contribute to the NAD(+) site; that span reads VNN. Substrate-binding residues include asparagine 120 and arginine 151. The active-site Proton acceptor is the histidine 175.

Belongs to the LDH/MDH superfamily. MDH type 3 family. As to quaternary structure, homotetramer (active enzyme); homodimer and homotrimer at temperatures lower than 55 degrees Celsius (inactive forms).

The enzyme catalyses (S)-malate + NAD(+) = oxaloacetate + NADH + H(+). In terms of biological role, catalyzes the reversible oxidation of malate to oxaloacetate. The polypeptide is Malate dehydrogenase (Chloroflexus aurantiacus (strain ATCC 29366 / DSM 635 / J-10-fl)).